A 394-amino-acid chain; its full sequence is Xylose isomerase (394 aa).

Residues His54 and Asp57 contribute to the active site. 7 residues coordinate Mg(2+): Glu181, Glu217, His220, Asp245, Asp255, Asp257, and Asp292.

This sequence belongs to the xylose isomerase family. Homotetramer. Mg(2+) is required as a cofactor.

Its subcellular location is the cytoplasm. The enzyme catalyses alpha-D-xylose = alpha-D-xylulofuranose. The protein is Xylose isomerase (xylA) of Actinoplanes missouriensis (strain ATCC 14538 / DSM 43046 / CBS 188.64 / JCM 3121 / NBRC 102363 / NCIMB 12654 / NRRL B-3342 / UNCC 431).